A 790-amino-acid chain; its full sequence is Penicillin-binding protein 1A (790 aa).

Over 1–20 the chain is Cytoplasmic; the sequence is MANVRKRRKKKNEHKALRLT. The helical; Signal-anchor for type II membrane protein transmembrane segment at 21 to 41 threads the bilayer; it reads FITLLMVFLFSCVAAAGVGLA. Residues 42 to 790 are Extracellular-facing; sequence MIKAAPPLDV…RKRKMIKPQI (749 aa). Positions 61 to 230 are transglycosylase; the sequence is SVIYDDKNKL…PQSPSTFYNA (170 aa). E100 serves as the catalytic Proton donor; for transglycosylase activity. A transpeptidase region spans residues 363-656; that stretch reads ASVSIVDYKT…AALIWKLIMG (294 aa). S402 acts as the Acyl-ester intermediate; for transpeptidase activity in catalysis. Positions 720-790 are disordered; the sequence is NKDKDDDDDD…RKRKMIKPQI (71 aa). Residues 724 to 740 are compositionally biased toward acidic residues; the sequence is DDDDDDKDKDKEDEEEN. A compositionally biased stretch (basic and acidic residues) spans 741 to 779; it reads KDEKNEDKKEAKDNTKNKDKDKKKDNDRKIDMDKKPDSS. The segment covering 780–790 has biased composition (basic residues); that stretch reads KRKRKMIKPQI.

It in the N-terminal section; belongs to the glycosyltransferase 51 family. This sequence in the C-terminal section; belongs to the transpeptidase family.

The protein localises to the cell membrane. The enzyme catalyses [GlcNAc-(1-&gt;4)-Mur2Ac(oyl-L-Ala-gamma-D-Glu-L-Lys-D-Ala-D-Ala)](n)-di-trans,octa-cis-undecaprenyl diphosphate + beta-D-GlcNAc-(1-&gt;4)-Mur2Ac(oyl-L-Ala-gamma-D-Glu-L-Lys-D-Ala-D-Ala)-di-trans,octa-cis-undecaprenyl diphosphate = [GlcNAc-(1-&gt;4)-Mur2Ac(oyl-L-Ala-gamma-D-Glu-L-Lys-D-Ala-D-Ala)](n+1)-di-trans,octa-cis-undecaprenyl diphosphate + di-trans,octa-cis-undecaprenyl diphosphate + H(+). It catalyses the reaction Preferential cleavage: (Ac)2-L-Lys-D-Ala-|-D-Ala. Also transpeptidation of peptidyl-alanyl moieties that are N-acyl substituents of D-alanine.. It participates in cell wall biogenesis; peptidoglycan biosynthesis. Its function is as follows. Cell wall formation. Synthesis of cross-linked peptidoglycan from the lipid intermediates. The enzyme has a penicillin-insensitive transglycosylase N-terminal domain (formation of linear glycan strands) and a penicillin-sensitive transpeptidase C-terminal domain (cross-linking of the peptide subunits). This chain is Penicillin-binding protein 1A (pbpA), found in Clostridium tetani (strain Massachusetts / E88).